A 685-amino-acid polypeptide reads, in one-letter code: Iron(3+)-hydroxamate import system permease protein FhuB (685 aa).

18 helical membrane passes run 35 to 55 (ALLL…NFSV), 87 to 107 (LAIS…FQQV), 120 to 140 (VATG…PGAL), 143 to 163 (QFAA…VAWG), 172 to 192 (ILAG…LVIF), 222 to 242 (QLLG…LMGL), 265 to 285 (AIVL…IGLF), 302 to 322 (LMLA…IILW), 328 to 348 (MEVS…LWLL), 373 to 393 (LAFA…ALSF), 416 to 436 (WPRI…GCII), 456 to 476 (AAFG…GWLL), 479 to 499 (GSLG…RGGF), 504 to 524 (MLLA…MLQA), 553 to 573 (AIVM…LTIL), 592 to 612 (IALL…IGPL), 632 to 652 (MPHM…ADWC), and 660 to 680 (YQIP…IYLL).

The protein belongs to the binding-protein-dependent transport system permease family. FecCD subfamily. In terms of assembly, the complex is composed of two ATP-binding proteins (FhuC), a transmembrane protein (FhuB) and a solute-binding protein (FhuD).

It is found in the cell inner membrane. Its function is as follows. Part of the ABC transporter complex FhuCDB involved in iron(3+)-hydroxamate import. Responsible for the translocation of the substrate across the membrane. Involved in ferrioxamine-mediated iron(III) utilization. In Salmonella typhimurium (strain LT2 / SGSC1412 / ATCC 700720), this protein is Iron(3+)-hydroxamate import system permease protein FhuB (fhuB).